Consider the following 324-residue polypeptide: D-alanine--D-alanine ligase (324 aa).

The region spanning 121–321 is the ATP-grasp domain; that stretch reads NQYLKAFGVR…IKDVMTDIIE (201 aa). 149–204 provides a ligand contact to ATP; the sequence is VEKIGLPCFIKPNLGGSSFGVTKVKTREQIQPAIAKAFSEAEEVMIEAFMGGTELT. 3 residues coordinate Mg(2+): D275, E288, and N290.

This sequence belongs to the D-alanine--D-alanine ligase family. Requires Mg(2+) as cofactor. Mn(2+) serves as cofactor.

It localises to the cytoplasm. It catalyses the reaction 2 D-alanine + ATP = D-alanyl-D-alanine + ADP + phosphate + H(+). It participates in cell wall biogenesis; peptidoglycan biosynthesis. Its function is as follows. Cell wall formation. The polypeptide is D-alanine--D-alanine ligase (Bacteroides fragilis (strain YCH46)).